The sequence spans 215 residues: Ribonuclease (215 aa).

Residues 1-22 form the signal peptide; the sequence is MKKIVVLLGMLLAPWFSSAVQA. Residues His-62, Glu-102, and His-106 contribute to the active site. Residues 144 to 166 form a disordered region; sequence KPLPAQGGSGQCQRLAGPGQHHG.

The protein belongs to the RNase T2 family.

It localises to the periplasm. It is found in the cytoplasm. In terms of biological role, one of the few RNases that cleave the phosphodiester bond between any two nucleotide. Shows a preference for adenylic acid. The chain is Ribonuclease from Aeromonas hydrophila.